The chain runs to 519 residues: Maturase K (519 aa).

This sequence belongs to the intron maturase 2 family. MatK subfamily.

The protein localises to the plastid. It localises to the chloroplast. In terms of biological role, usually encoded in the trnK tRNA gene intron. Probably assists in splicing its own and other chloroplast group II introns. The polypeptide is Maturase K (Dioscorea elephantipes (Elephant's foot yam)).